The chain runs to 206 residues: MAANKNKNQSSLVLHKVIMVGSGGVGKSALTLQFMYDEFVEDYEPTKADSYRKKVVLDGEEVQIDILDTAGQEDYAAIRDNYFRSGEGFLLVFSITEHESFTATAEFREQILRVKAEEDKIPLLIVGNKSDLEDRRQVPMDEARGKAEEWGVQYVETSAKTRANVDKVFFDLMREIRTKKMSENKDKNGKKSGKSKKGFKQRCCLL.

21–28 serves as a coordination point for GTP; it reads GSGGVGKS. Positions 43–51 match the Effector region motif; that stretch reads YEPTKADSY. GTP is bound by residues 68 to 72 and 128 to 131; these read DTAGQ and NKSD. The span at 180–189 shows a compositional bias: basic and acidic residues; that stretch reads KMSENKDKNG. A disordered region spans residues 180–206; the sequence is KMSENKDKNGKKSGKSKKGFKQRCCLL. The span at 190–200 shows a compositional bias: basic residues; sequence KKSGKSKKGFK. The residue at position 203 (cysteine 203) is a Cysteine methyl ester. Cysteine 203 carries the S-geranylgeranyl cysteine lipid modification. The propeptide at 204–206 is removed in mature form; it reads CLL.

The protein belongs to the small GTPase superfamily. Ras family. Interacts with ralbp1 and rap1gds1. As to expression, weakly expressed in adult tissues and highest levels were found in heart, brain and testes.

Its subcellular location is the cell membrane. It is found in the midbody. It carries out the reaction GTP + H2O = GDP + phosphate + H(+). Its function is as follows. Multifunctional GTPase involved in a variety of cellular processes including gene expression, cell migration, cell proliferation, oncogenic transformation and membrane trafficking. Accomplishes its multiple functions by interacting with distinct downstream effectors. Acts as a GTP sensor for GTP-dependent exocytosis of dense core vesicles. Required both to stabilize the assembly of the exocyst complex and to localize functional exocyst complexes to the leading edge of migrating cells. Required for suppression of apoptosis. In late stages of cytokinesis, upon completion of the bridge formation between dividing cells, mediates exocyst recruitment to the midbody to drive abscission. Regulates the actin cytoskeleton to play a role in gastrulation or neurulation. During the cleavage stages, the GTP-bound form induces a cortical reaction that affects the localization of pigment granules. Activated by the FGF pathway via ras and ral-GDS, but independently of raf. Directs ralbp1 to the plasma membrane. Involved in ligand-dependent receptor mediated endocytosis of the EGF and insulin receptors. This Xenopus laevis (African clawed frog) protein is Ras-related protein ralB-A (ralb-a).